A 172-amino-acid polypeptide reads, in one-letter code: 3-hydroxydecanoyl-[acyl-carrier-protein] dehydratase (172 aa).

H71 is an active-site residue.

Belongs to the thioester dehydratase family. FabA subfamily. As to quaternary structure, homodimer.

It localises to the cytoplasm. The enzyme catalyses a (3R)-hydroxyacyl-[ACP] = a (2E)-enoyl-[ACP] + H2O. The catalysed reaction is (3R)-hydroxydecanoyl-[ACP] = (2E)-decenoyl-[ACP] + H2O. It catalyses the reaction (2E)-decenoyl-[ACP] = (3Z)-decenoyl-[ACP]. It functions in the pathway lipid metabolism; fatty acid biosynthesis. Its function is as follows. Necessary for the introduction of cis unsaturation into fatty acids. Catalyzes the dehydration of (3R)-3-hydroxydecanoyl-ACP to E-(2)-decenoyl-ACP and then its isomerization to Z-(3)-decenoyl-ACP. Can catalyze the dehydratase reaction for beta-hydroxyacyl-ACPs with saturated chain lengths up to 16:0, being most active on intermediate chain length. This chain is 3-hydroxydecanoyl-[acyl-carrier-protein] dehydratase, found in Proteus mirabilis (strain HI4320).